A 166-amino-acid polypeptide reads, in one-letter code: Lipoprotein signal peptidase (166 aa).

A run of 4 helical transmembrane segments spans residues 11 to 31 (LNLVIILVVFIFDRTTKLYIL), 42 to 62 (IYITPFLNLFLIWNKGIAFGL), 69 to 89 (VIYNSITILIGLIIIAIIFMM), and 99 to 119 (FFALIAGGAFGNFYDRIVYTA). Residues aspartate 122 and aspartate 140 contribute to the active site. Residues 133–153 (WFVFNVADIFITIGVFCLILV) form a helical membrane-spanning segment.

This sequence belongs to the peptidase A8 family.

The protein resides in the cell inner membrane. It catalyses the reaction Release of signal peptides from bacterial membrane prolipoproteins. Hydrolyzes -Xaa-Yaa-Zaa-|-(S,diacylglyceryl)Cys-, in which Xaa is hydrophobic (preferably Leu), and Yaa (Ala or Ser) and Zaa (Gly or Ala) have small, neutral side chains.. Its pathway is protein modification; lipoprotein biosynthesis (signal peptide cleavage). This protein specifically catalyzes the removal of signal peptides from prolipoproteins. The chain is Lipoprotein signal peptidase from Pelagibacter ubique (strain HTCC1062).